The sequence spans 62 residues: Photosystem II reaction center protein Z (62 aa).

Transmembrane regions (helical) follow at residues 8–28 and 41–61; these read AVFA…VVFA and FSGT…NSLI.

The protein belongs to the PsbZ family. PSII is composed of 1 copy each of membrane proteins PsbA, PsbB, PsbC, PsbD, PsbE, PsbF, PsbH, PsbI, PsbJ, PsbK, PsbL, PsbM, PsbT, PsbY, PsbZ, Psb30/Ycf12, at least 3 peripheral proteins of the oxygen-evolving complex and a large number of cofactors. It forms dimeric complexes.

It is found in the plastid. The protein resides in the chloroplast thylakoid membrane. May control the interaction of photosystem II (PSII) cores with the light-harvesting antenna, regulates electron flow through the 2 photosystem reaction centers. PSII is a light-driven water plastoquinone oxidoreductase, using light energy to abstract electrons from H(2)O, generating a proton gradient subsequently used for ATP formation. This chain is Photosystem II reaction center protein Z, found in Amborella trichopoda.